A 324-amino-acid chain; its full sequence is Bis(5'-nucleosyl)-tetraphosphatase, symmetrical (324 aa).

The segment at 269–324 is disordered; sequence PGREVTAPATAPRAPRRPRERQGRQRARGGRGGGNGNGNGGNAAAPAAAPGDAPQE. Residues 282 to 297 show a composition bias toward basic residues; the sequence is APRRPRERQGRQRARG. Residues 298–309 show a composition bias toward gly residues; it reads GRGGGNGNGNGG. The span at 310–324 shows a compositional bias: low complexity; that stretch reads NAAAPAAAPGDAPQE.

This sequence belongs to the Ap4A hydrolase family.

The catalysed reaction is P(1),P(4)-bis(5'-adenosyl) tetraphosphate + H2O = 2 ADP + 2 H(+). Hydrolyzes diadenosine 5',5'''-P1,P4-tetraphosphate to yield ADP. In Xanthomonas campestris pv. campestris (strain ATCC 33913 / DSM 3586 / NCPPB 528 / LMG 568 / P 25), this protein is Bis(5'-nucleosyl)-tetraphosphatase, symmetrical.